A 299-amino-acid chain; its full sequence is Regucalcin (299 aa).

E18 contacts a divalent metal cation. 3 residues coordinate substrate: R101, N103, and E121. K144 is modified (N6-succinyllysine). The a divalent metal cation site is built by N154 and D204. The active-site Proton donor/acceptor is the D204. An N6-succinyllysine mark is found at K244 and K253.

Belongs to the SMP-30/CGR1 family. Monomer. The cofactor is Zn(2+). Mn(2+) serves as cofactor. It depends on Ca(2+) as a cofactor. Mg(2+) is required as a cofactor.

The protein resides in the cytoplasm. The catalysed reaction is D-glucono-1,5-lactone + H2O = D-gluconate + H(+). Gluconolactonase with low activity towards other sugar lactones, including gulonolactone and galactonolactone. Can also hydrolyze diisopropyl phosphorofluoridate and phenylacetate (in vitro). Calcium-binding protein. Modulates Ca(2+) signaling, and Ca(2+)-dependent cellular processes and enzyme activities. The chain is Regucalcin (RGN) from Pongo abelii (Sumatran orangutan).